The primary structure comprises 251 residues: Triosephosphate isomerase 1 (251 aa).

N9–K11 contacts substrate. H95 (electrophile) is an active-site residue. The active-site Proton acceptor is the E167. Substrate-binding positions include G173, S213, and G234 to G235.

Belongs to the triosephosphate isomerase family. As to quaternary structure, homodimer.

The protein resides in the cytoplasm. It carries out the reaction D-glyceraldehyde 3-phosphate = dihydroxyacetone phosphate. It functions in the pathway carbohydrate biosynthesis; gluconeogenesis. It participates in carbohydrate degradation; glycolysis; D-glyceraldehyde 3-phosphate from glycerone phosphate: step 1/1. Its function is as follows. Involved in the gluconeogenesis. Catalyzes stereospecifically the conversion of dihydroxyacetone phosphate (DHAP) to D-glyceraldehyde-3-phosphate (G3P). The polypeptide is Triosephosphate isomerase 1 (Listeria innocua serovar 6a (strain ATCC BAA-680 / CLIP 11262)).